A 620-amino-acid polypeptide reads, in one-letter code: 1-deoxy-D-xylulose-5-phosphate synthase (620 aa).

Residues H80 and 121-123 contribute to the thiamine diphosphate site; that span reads GHS. D152 contributes to the Mg(2+) binding site. Thiamine diphosphate is bound by residues 153–154, N181, Y288, and E370; that span reads GA. N181 provides a ligand contact to Mg(2+).

It belongs to the transketolase family. DXPS subfamily. As to quaternary structure, homodimer. Mg(2+) is required as a cofactor. The cofactor is thiamine diphosphate.

It carries out the reaction D-glyceraldehyde 3-phosphate + pyruvate + H(+) = 1-deoxy-D-xylulose 5-phosphate + CO2. The protein operates within metabolic intermediate biosynthesis; 1-deoxy-D-xylulose 5-phosphate biosynthesis; 1-deoxy-D-xylulose 5-phosphate from D-glyceraldehyde 3-phosphate and pyruvate: step 1/1. Catalyzes the acyloin condensation reaction between C atoms 2 and 3 of pyruvate and glyceraldehyde 3-phosphate to yield 1-deoxy-D-xylulose-5-phosphate (DXP). This Photobacterium profundum (strain SS9) protein is 1-deoxy-D-xylulose-5-phosphate synthase.